Reading from the N-terminus, the 121-residue chain is UPF0231 protein ESA_03214 (121 aa).

This sequence belongs to the UPF0231 family.

The sequence is that of UPF0231 protein ESA_03214 from Cronobacter sakazakii (strain ATCC BAA-894) (Enterobacter sakazakii).